The chain runs to 527 residues: Probable feruloyl esterase B (527 aa).

An N-terminal signal peptide occupies residues 1–19; that stretch reads MALLRHLLPVLTVGSAVQS. Intrachain disulfides connect C31–C76 and C65–C115. N56, N86, and N139 each carry an N-linked (GlcNAc...) asparagine glycan. 4 disulfide bridges follow: C188-C442, C257-C274, C283-C292, and C504-C526. S189 (acyl-ester intermediate) is an active-site residue. Residues D258, D261, A263, D265, and I267 each contribute to the Ca(2+) site. A glycan (N-linked (GlcNAc...) asparagine) is linked at N277. Residues N312 and N356 are each glycosylated (N-linked (GlcNAc...) asparagine). Catalysis depends on charge relay system residues D401 and H441.

The protein belongs to the tannase family.

The protein localises to the secreted. The enzyme catalyses feruloyl-polysaccharide + H2O = ferulate + polysaccharide.. Involved in degradation of plant cell walls. Hydrolyzes the feruloyl-arabinose ester bond in arabinoxylans as well as the feruloyl-galactose and feruloyl-arabinose ester bonds in pectin. The chain is Probable feruloyl esterase B (faeB) from Emericella nidulans (strain FGSC A4 / ATCC 38163 / CBS 112.46 / NRRL 194 / M139) (Aspergillus nidulans).